A 546-amino-acid polypeptide reads, in one-letter code: Chaperonin GroEL (546 aa).

ATP-binding positions include 30–33 (TLGP), Lys-51, 87–91 (DGTTT), Gly-415, and Asp-497. Residues 527–546 (PKKDSPAPAMPGGGMGGMDF) form a disordered region. Residues 537-546 (PGGGMGGMDF) are compositionally biased toward gly residues.

Belongs to the chaperonin (HSP60) family. As to quaternary structure, forms a cylinder of 14 subunits composed of two heptameric rings stacked back-to-back. Interacts with the co-chaperonin GroES.

It localises to the cytoplasm. The enzyme catalyses ATP + H2O + a folded polypeptide = ADP + phosphate + an unfolded polypeptide.. Its function is as follows. Together with its co-chaperonin GroES, plays an essential role in assisting protein folding. The GroEL-GroES system forms a nano-cage that allows encapsulation of the non-native substrate proteins and provides a physical environment optimized to promote and accelerate protein folding. In Methylobacterium radiotolerans (strain ATCC 27329 / DSM 1819 / JCM 2831 / NBRC 15690 / NCIMB 10815 / 0-1), this protein is Chaperonin GroEL.